A 352-amino-acid polypeptide reads, in one-letter code: Alanine racemase (352 aa).

The active-site Proton acceptor; specific for D-alanine is lysine 34. Lysine 34 is modified (N6-(pyridoxal phosphate)lysine). Arginine 126 contacts substrate. Residue tyrosine 248 is the Proton acceptor; specific for L-alanine of the active site. Position 296 (methionine 296) interacts with substrate.

It belongs to the alanine racemase family. It depends on pyridoxal 5'-phosphate as a cofactor.

It catalyses the reaction L-alanine = D-alanine. Its pathway is amino-acid biosynthesis; D-alanine biosynthesis; D-alanine from L-alanine: step 1/1. In terms of biological role, catalyzes the interconversion of L-alanine and D-alanine. May also act on other amino acids. This Deinococcus deserti (strain DSM 17065 / CIP 109153 / LMG 22923 / VCD115) protein is Alanine racemase (alr).